We begin with the raw amino-acid sequence, 938 residues long: Isoleucine--tRNA ligase (938 aa).

Positions 58 to 68 match the 'HIGH' region motif; the sequence is PYANGSIHIGH. E561 provides a ligand contact to L-isoleucyl-5'-AMP. Positions 602–606 match the 'KMSKS' region motif; it reads KMSKS. ATP is bound at residue K605. 4 residues coordinate Zn(2+): C901, C904, C921, and C924.

It belongs to the class-I aminoacyl-tRNA synthetase family. IleS type 1 subfamily. Monomer. The cofactor is Zn(2+).

It is found in the cytoplasm. It catalyses the reaction tRNA(Ile) + L-isoleucine + ATP = L-isoleucyl-tRNA(Ile) + AMP + diphosphate. Functionally, catalyzes the attachment of isoleucine to tRNA(Ile). As IleRS can inadvertently accommodate and process structurally similar amino acids such as valine, to avoid such errors it has two additional distinct tRNA(Ile)-dependent editing activities. One activity is designated as 'pretransfer' editing and involves the hydrolysis of activated Val-AMP. The other activity is designated 'posttransfer' editing and involves deacylation of mischarged Val-tRNA(Ile). This is Isoleucine--tRNA ligase from Citrobacter koseri (strain ATCC BAA-895 / CDC 4225-83 / SGSC4696).